A 248-amino-acid polypeptide reads, in one-letter code: Probable transcriptional regulatory protein Bind_0345 (248 aa).

The protein belongs to the TACO1 family.

It is found in the cytoplasm. In Beijerinckia indica subsp. indica (strain ATCC 9039 / DSM 1715 / NCIMB 8712), this protein is Probable transcriptional regulatory protein Bind_0345.